Here is a 386-residue protein sequence, read N- to C-terminus: MTDGALTRLEHGLAALKADHLARRRPLLDGAQGAHVTIDGRRVVSFCSNDYLGLANDPALVAAAHAALDGCGVGAGAAHLISGHHRLHLEFETDFAQWVGKPAALLFSTGYLANLAVVTALISRRGEVFADKLNHASLVDAAKLSGARFSRYRHGDLAQLESRLAASTARDRMIVSDLVFSMDGDVAPVDALLDLAERYDAWLYLDDAHGFGVLNGGRGGLSERARASTRVIYLATLGKAAGVAGASVAADGRVIEWLIQTARPYIYTTAAPPLLAAALRESLRQIAAGAARRGRLQRHVARLRSGLGGLKNAVLADSFTPIQPLIVGANADALTLSQALLQRGILVPAIRTPTVPANTARLRITLSAAHSDADVARLVETVHELA.

A substrate-binding site is contributed by Arg-23. 110–111 provides a ligand contact to pyridoxal 5'-phosphate; the sequence is GY. His-135 serves as a coordination point for substrate. Positions 181, 209, and 236 each coordinate pyridoxal 5'-phosphate. Lys-239 carries the N6-(pyridoxal phosphate)lysine modification. Thr-354 contacts substrate.

Belongs to the class-II pyridoxal-phosphate-dependent aminotransferase family. BioF subfamily. Homodimer. The cofactor is pyridoxal 5'-phosphate.

The catalysed reaction is 6-carboxyhexanoyl-[ACP] + L-alanine + H(+) = (8S)-8-amino-7-oxononanoate + holo-[ACP] + CO2. It participates in cofactor biosynthesis; biotin biosynthesis. Its function is as follows. Catalyzes the decarboxylative condensation of pimeloyl-[acyl-carrier protein] and L-alanine to produce 8-amino-7-oxononanoate (AON), [acyl-carrier protein], and carbon dioxide. The sequence is that of 8-amino-7-oxononanoate synthase from Thiobacillus denitrificans (strain ATCC 25259 / T1).